Consider the following 359-residue polypeptide: tRNA N6-adenosine threonylcarbamoyltransferase (359 aa).

Fe cation contacts are provided by histidine 115 and histidine 119. Substrate-binding positions include 137–141 (LVSGG), aspartate 170, glycine 183, and asparagine 283. Aspartate 311 contributes to the Fe cation binding site. The segment at 328–359 (APDSLDIAPRSRWPLDEKSAPVFGTGRRGAKA) is disordered.

It belongs to the KAE1 / TsaD family. Requires Fe(2+) as cofactor.

The protein resides in the cytoplasm. It catalyses the reaction L-threonylcarbamoyladenylate + adenosine(37) in tRNA = N(6)-L-threonylcarbamoyladenosine(37) in tRNA + AMP + H(+). In terms of biological role, required for the formation of a threonylcarbamoyl group on adenosine at position 37 (t(6)A37) in tRNAs that read codons beginning with adenine. Is involved in the transfer of the threonylcarbamoyl moiety of threonylcarbamoyl-AMP (TC-AMP) to the N6 group of A37, together with TsaE and TsaB. TsaD likely plays a direct catalytic role in this reaction. The sequence is that of tRNA N6-adenosine threonylcarbamoyltransferase from Brucella abortus (strain S19).